Reading from the N-terminus, the 594-residue chain is Aspartate--tRNA(Asp/Asn) ligase (594 aa).

Glu173 provides a ligand contact to L-aspartate. The tract at residues 197 to 200 (QLFK) is aspartate. Arg219 lines the L-aspartate pocket. Residues 219 to 221 (RDE) and Gln228 each bind ATP. An L-aspartate-binding site is contributed by His451. Glu485 contacts ATP. Arg492 is a binding site for L-aspartate. Residue 537 to 540 (GWDR) participates in ATP binding. The segment at 566–594 (PLTDAPAPITAQQRKESGIDAQPKRVQQA) is disordered.

It belongs to the class-II aminoacyl-tRNA synthetase family. Type 1 subfamily. As to quaternary structure, homodimer.

It is found in the cytoplasm. It carries out the reaction tRNA(Asx) + L-aspartate + ATP = L-aspartyl-tRNA(Asx) + AMP + diphosphate. Aspartyl-tRNA synthetase with relaxed tRNA specificity since it is able to aspartylate not only its cognate tRNA(Asp) but also tRNA(Asn). Reaction proceeds in two steps: L-aspartate is first activated by ATP to form Asp-AMP and then transferred to the acceptor end of tRNA(Asp/Asn). This Mycobacterium tuberculosis (strain CDC 1551 / Oshkosh) protein is Aspartate--tRNA(Asp/Asn) ligase.